Here is a 160-residue protein sequence, read N- to C-terminus: Phosphopantetheine adenylyltransferase (160 aa).

Substrate is bound at residue Thr11. Residues 11-12 (TF) and His19 contribute to the ATP site. Substrate-binding residues include Lys43, Thr75, and Arg89. ATP contacts are provided by residues 90-92 (GLR), Glu100, and 125-131 (YSFLSSS).

This sequence belongs to the bacterial CoaD family. As to quaternary structure, homohexamer. Mg(2+) serves as cofactor.

The protein resides in the cytoplasm. It carries out the reaction (R)-4'-phosphopantetheine + ATP + H(+) = 3'-dephospho-CoA + diphosphate. It participates in cofactor biosynthesis; coenzyme A biosynthesis; CoA from (R)-pantothenate: step 4/5. Its function is as follows. Reversibly transfers an adenylyl group from ATP to 4'-phosphopantetheine, yielding dephospho-CoA (dPCoA) and pyrophosphate. This is Phosphopantetheine adenylyltransferase from Listeria monocytogenes serotype 4b (strain CLIP80459).